The following is a 52-amino-acid chain: MLTWSIIFLVVAIIAGLLGFGGIAGTATGIAKILFALFLILFVVSLLFGRTG.

2 consecutive transmembrane segments (helical) span residues 4–24 (WSII…GGIA) and 29–49 (GIAK…LLFG).

Belongs to the UPF0391 family.

Its subcellular location is the cell membrane. The polypeptide is UPF0391 membrane protein Avin_10980 (Azotobacter vinelandii (strain DJ / ATCC BAA-1303)).